Reading from the N-terminus, the 103-residue chain is c-Myc-binding protein (103 aa).

This sequence belongs to the AMY1 family. Binds via its C-terminal region to the N-terminal region of MYC. Associates with AKAP1/S-AKAP84. Interacts with MYCBPAP. Interacts with CFAP91. Highly expressed in heart, placenta, pancreas, skeletal muscle and kidney. Also present at low levels in lung.

The protein resides in the cytoplasm. Its subcellular location is the nucleus. It localises to the mitochondrion. Its function is as follows. May control the transcriptional activity of MYC. Stimulates the activation of E box-dependent transcription by MYC. The polypeptide is c-Myc-binding protein (Homo sapiens (Human)).